We begin with the raw amino-acid sequence, 773 residues long: uncharacterized protein (773 aa).

The segment at 192–219 is disordered; sequence EASGTNNNPKEIEMNSDTTSSVPKSGST.

Its subcellular location is the cytoplasm. This is an uncharacterized protein from Schizosaccharomyces pombe (strain 972 / ATCC 24843) (Fission yeast).